We begin with the raw amino-acid sequence, 21 residues long: Formate ester dehydrogenase beta chain (21 aa).

Heterotrimer composed of an alpha, a beta and a gamma chain.

The polypeptide is Formate ester dehydrogenase beta chain (Amycolatopsis methanolica).